The sequence spans 338 residues: uncharacterized protein (338 aa).

This is an uncharacterized protein from Acanthamoeba polyphaga (Amoeba).